A 198-amino-acid chain; its full sequence is Threonylcarbamoyl-AMP synthase (198 aa).

Positions 15–198 (LLKIYHIIKL…AISGQLIRRG (184 aa)) constitute a YrdC-like domain.

Belongs to the SUA5 family. TsaC subfamily.

Its subcellular location is the cytoplasm. It catalyses the reaction L-threonine + hydrogencarbonate + ATP = L-threonylcarbamoyladenylate + diphosphate + H2O. Functionally, required for the formation of a threonylcarbamoyl group on adenosine at position 37 (t(6)A37) in tRNAs that read codons beginning with adenine. Catalyzes the conversion of L-threonine, HCO(3)(-)/CO(2) and ATP to give threonylcarbamoyl-AMP (TC-AMP) as the acyladenylate intermediate, with the release of diphosphate. The chain is Threonylcarbamoyl-AMP synthase from Baumannia cicadellinicola subsp. Homalodisca coagulata.